Consider the following 592-residue polypeptide: A-type ATP synthase subunit A (592 aa).

233 to 240 is a binding site for ATP; sequence GPFGSGKT.

The protein belongs to the ATPase alpha/beta chains family. As to quaternary structure, has multiple subunits with at least A(3), B(3), C, D, E, F, H, I and proteolipid K(x).

Its subcellular location is the cell membrane. The enzyme catalyses ATP + H2O + 4 H(+)(in) = ADP + phosphate + 5 H(+)(out). Component of the A-type ATP synthase that produces ATP from ADP in the presence of a proton gradient across the membrane. The A chain is the catalytic subunit. This Saccharolobus islandicus (strain Y.N.15.51 / Yellowstone #2) (Sulfolobus islandicus) protein is A-type ATP synthase subunit A.